The primary structure comprises 407 residues: uncharacterized protein (407 aa).

Disordered stretches follow at residues 1-62 (MTGR…NGDP) and 350-379 (SVTP…KPSS). Residues 17-30 (PVEKMPRFQREHGA) show a composition bias toward basic and acidic residues.

This is an uncharacterized protein from Ictaluridae (bullhead catfishes).